The primary structure comprises 407 residues: Large ribosomal subunit protein uL3-like (407 aa).

The segment covering 1–31 (MSHRKFSAPRHGHLGFLPHKRSRRHRGKVKS) has biased composition (basic residues). The segment at 1-37 (MSHRKFSAPRHGHLGFLPHKRSRRHRGKVKSWPRDDP) is disordered.

It belongs to the universal ribosomal protein uL3 family. As to quaternary structure, component of the large ribosomal subunit (LSU). Part of a LSU subcomplex, the 5S RNP which is composed of the 5S RNA, RPL5 and RPL11. Interacts with NVL in an ATP-dependent manner. Interacts with RRP1B. Interacts with IPO5, IPO7 and KPNB1; these interactions may be involved in RPL5 nuclear import for the assembly of ribosomal subunits. Interacts with RRP1B. Expression is restricted to striated muscles.

Its function is as follows. Heart- and skeletal muscle-specific component of the ribosome, which regulates muscle function. Component of the large ribosomal subunit in striated muscle cells: replaces the RPL3 paralog in the ribosome in these cells. The ribosome is a large ribonucleoprotein complex responsible for the synthesis of proteins in the cell. Inhibits myotube growth and muscle function. The sequence is that of Large ribosomal subunit protein uL3-like from Mus musculus (Mouse).